The primary structure comprises 574 residues: Secreted lipase 1 (574 aa).

An N-terminal signal peptide occupies residues Met1–Ala17. A disulfide bond links Cys95 and Cys132. Ser244 serves as the catalytic Acyl-ester intermediate. Residues Cys303 and Cys312 are joined by a disulfide bond. Residue Asn323 is glycosylated (N-linked (GlcNAc...) asparagine). Glu376 serves as the catalytic Charge relay system. A glycan (N-linked (GlcNAc...) asparagine) is linked at Asn386. His489 acts as the Charge relay system in catalysis. A glycan (N-linked (GlcNAc...) asparagine) is linked at Asn524.

It belongs to the type-B carboxylesterase/lipase family.

The protein localises to the secreted. It carries out the reaction a carboxylic ester + H2O = an alcohol + a carboxylate + H(+). Secreted lipase that allows the use of hydrolyzed lipids as carbon sources. Has highest activity with methyl umbelliferyl oleate (C18:1), whereas much lower activities are obtained with the respective esters of palmitate (C16:0) and stearate (C18:0) (24% and 12% of the activity obtained with umbelliferyl oleate, respectively). Hydrolyzes 1- and 3-positioned ester bonds in preference to 2-positioned ester bonds. The production rate of monoglycerides is lower than that of diacylglycerides. Seems not required for the penetration of intact host tissue. The polypeptide is Secreted lipase 1 (Botryotinia fuckeliana (strain B05.10) (Noble rot fungus)).